Here is a 188-residue protein sequence, read N- to C-terminus: Elongation factor P (188 aa).

Belongs to the elongation factor P family.

Its subcellular location is the cytoplasm. It functions in the pathway protein biosynthesis; polypeptide chain elongation. In terms of biological role, involved in peptide bond synthesis. Stimulates efficient translation and peptide-bond synthesis on native or reconstituted 70S ribosomes in vitro. Probably functions indirectly by altering the affinity of the ribosome for aminoacyl-tRNA, thus increasing their reactivity as acceptors for peptidyl transferase. The sequence is that of Elongation factor P from Anaplasma phagocytophilum (strain HZ).